The sequence spans 68 residues: Conotoxin ArMMSK-01 (68 aa).

Residues 1 to 20 (MMSKLGVLLTICMLLFPLTA) form the signal peptide. Residues 21–51 (LPLDGDQPADRPAERMQDDFISEQHPLFNPI) constitute a propeptide that is removed on maturation. 3 disulfide bridges follow: cysteine 54-cysteine 67, cysteine 55-cysteine 63, and cysteine 59-cysteine 66. Proline 65 bears the 4-hydroxyproline mark.

Belongs to the conotoxin M superfamily. Expressed by the venom duct.

It localises to the secreted. This Conus arenatus (Sand-dusted cone) protein is Conotoxin ArMMSK-01.